A 179-amino-acid chain; its full sequence is Large ribosomal subunit protein uL6 (179 aa).

It belongs to the universal ribosomal protein uL6 family. As to quaternary structure, part of the 50S ribosomal subunit.

Its function is as follows. This protein binds to the 23S rRNA, and is important in its secondary structure. It is located near the subunit interface in the base of the L7/L12 stalk, and near the tRNA binding site of the peptidyltransferase center. This Synechococcus sp. (strain CC9311) protein is Large ribosomal subunit protein uL6.